Reading from the N-terminus, the 807-residue chain is MYSEGKLLKVFLIFAGFIIFSLCGEVVSQRYPPAPGLLKYLEQDVCYSLYYYLNWTSLADCKTNFEETGISDVPSTVKVRCQSKNSIRFETEPSEHWQLFILMEHDNFDPIPFTLIEPNNVFGELITTANKEYQIWSTYLDEYGTLQDWMEGPIVLKFDQRNQQPDDIKYNVTQEFKYIILGNDSYTINGKFVWNTTGDRDLCFDIANICQNTNMKHAKIWPTAHPSFDVENLVLNDECEIHVKGIHGTTKHKYKTPSCFELPECFLNNMEPEIPQDVAIAADQDLRGWWNINVAWAKPHFQPEIYNVTVRANMIRSIILPGNATETTFRNIPNTFLSAGKIYNVSVYAIIGQKASHTSRRAFTPGMLRWVWAGATAGAGCAAGGLLAATLLCCGHRRATSRVSQEDPDEKTPKEDDVEIIGIESGSADDHWEVRSDRVLLHEVIGEGAFGVVRRGTLAPGGKSVAVKMLKEFPSQEEVRSFRSEMELMKSVGAHPHVVSLVGCCSGRKPLIVAEYCSRGDLLSYLRSSWDIIVSKHTAKYYNNNMDSMDTSKLKVHKEHTKLVVNKLYELQGPCETELTPLDLLSFCRQIAMGMEFLASNRIVHRDLAARNVLVTEDKTLKIADFGLSRDIYEENQYKQKGNGKMPVKWMALESLTRRVYTTQSDVWSFGVVIWEIVTVGGSPYPEVPAARLVRSLRSGYRMPKPVNCSKPLYDIMRACWNASPRDRPTFPELHQKLDDLLHSACANEYITLEVDVDEAPSTPKPQRYIKMLIRGKLPWSRESYERPVNPTSNLYSSPPVIQTKTA.

The first 28 residues, 1–28 (MYSEGKLLKVFLIFAGFIIFSLCGEVVS), serve as a signal peptide directing secretion. Residues 29–370 (QRYPPAPGLL…RAFTPGMLRW (342 aa)) lie on the Extracellular side of the membrane. Cystine bridges form between Cys46–Cys61, Cys81–Cys203, Cys210–Cys239, and Cys259–Cys265. N-linked (GlcNAc...) asparagine glycosylation is found at Asn54, Asn171, Asn183, and Asn195. N-linked (GlcNAc...) asparagine glycosylation is found at Asn307, Asn323, and Asn344. The chain crosses the membrane as a helical span at residues 371–391 (VWAGATAGAGCAAGGLLAATL). Over 392 to 807 (LCCGHRRATS…SPPVIQTKTA (416 aa)) the chain is Cytoplasmic. Residues 439 to 738 (VLLHEVIGEG…PTFPELHQKL (300 aa)) enclose the Protein kinase domain. Residues 445 to 453 (IGEGAFGVV) and Lys468 each bind ATP. Asp607 acts as the Proton acceptor in catalysis.

This sequence belongs to the protein kinase superfamily. Tyr protein kinase family. Homodimer; disulfide-linked. Mg(2+) serves as cofactor. May be auto-phosphorylated on tyrosine residues. Post-translationally, at least one of the 3 cysteine residues Cys-381, Cys-393 or Cys-394 is involved in the formation of interchain disulfide bonds. The disulfide bond sites in the extracellular region are not involved in homodimer formation.

The protein resides in the cell membrane. It carries out the reaction L-tyrosyl-[protein] + ATP = O-phospho-L-tyrosyl-[protein] + ADP + H(+). In terms of biological role, probable receptor tyrosine kinase. During postembryonic development, involved in the initiation of metamorphosis probably by inducing the production of ecdysone in response to prothoracicotropic hormone (PTTH). Binding to PTTH stimulates activation of canonical MAPK signaling leading to ERK phosphorylation. This chain is Tyrosine-protein kinase receptor torso, found in Bombyx mori (Silk moth).